The chain runs to 54 residues: Ovomucoid (54 aa).

The Kazal-like domain maps to 4-54; it reads VDCSGYPTHACTLELKPLCGSDNQTYSNKCGFCNAVAQSNGTLTLSHFGKC. Cystine bridges form between cysteine 6–cysteine 36, cysteine 14–cysteine 33, and cysteine 22–cysteine 54. Asparagine 43 carries N-linked (GlcNAc...) asparagine glycosylation.

It is found in the secreted. The polypeptide is Ovomucoid (Leipoa ocellata (Malleefowl)).